We begin with the raw amino-acid sequence, 295 residues long: Pyridoxal 5'-phosphate synthase subunit PdxS (295 aa).

Asp-25 is a binding site for D-ribose 5-phosphate. Catalysis depends on Lys-82, which acts as the Schiff-base intermediate with D-ribose 5-phosphate. D-ribose 5-phosphate is bound at residue Gly-154. Residue Arg-166 coordinates D-glyceraldehyde 3-phosphate. Residues Gly-215 and 236–237 (GS) each bind D-ribose 5-phosphate.

It belongs to the PdxS/SNZ family. As to quaternary structure, in the presence of PdxT, forms a dodecamer of heterodimers.

It catalyses the reaction aldehydo-D-ribose 5-phosphate + D-glyceraldehyde 3-phosphate + L-glutamine = pyridoxal 5'-phosphate + L-glutamate + phosphate + 3 H2O + H(+). It functions in the pathway cofactor biosynthesis; pyridoxal 5'-phosphate biosynthesis. In terms of biological role, catalyzes the formation of pyridoxal 5'-phosphate from ribose 5-phosphate (RBP), glyceraldehyde 3-phosphate (G3P) and ammonia. The ammonia is provided by the PdxT subunit. Can also use ribulose 5-phosphate and dihydroxyacetone phosphate as substrates, resulting from enzyme-catalyzed isomerization of RBP and G3P, respectively. This is Pyridoxal 5'-phosphate synthase subunit PdxS from Listeria welshimeri serovar 6b (strain ATCC 35897 / DSM 20650 / CCUG 15529 / CIP 8149 / NCTC 11857 / SLCC 5334 / V8).